The primary structure comprises 178 residues: Large ribosomal subunit protein uL6 (178 aa).

It belongs to the universal ribosomal protein uL6 family. As to quaternary structure, part of the 50S ribosomal subunit.

Functionally, this protein binds to the 23S rRNA, and is important in its secondary structure. It is located near the subunit interface in the base of the L7/L12 stalk, and near the tRNA binding site of the peptidyltransferase center. The sequence is that of Large ribosomal subunit protein uL6 from Coxiella burnetii (strain CbuG_Q212) (Coxiella burnetii (strain Q212)).